The sequence spans 377 residues: UPF0754 membrane protein BPUM_0927 (377 aa).

Transmembrane regions (helical) follow at residues 1–21 (MNIFTTFLFMIVIGAVIGAAT) and 357–377 (FLGGFLGGLIGAIQAIFVTLF).

This sequence belongs to the UPF0754 family.

The protein localises to the cell membrane. The protein is UPF0754 membrane protein BPUM_0927 of Bacillus pumilus (strain SAFR-032).